Consider the following 114-residue polypeptide: Large ribosomal subunit protein uL22 (114 aa).

Belongs to the universal ribosomal protein uL22 family. As to quaternary structure, part of the 50S ribosomal subunit.

Functionally, this protein binds specifically to 23S rRNA; its binding is stimulated by other ribosomal proteins, e.g. L4, L17, and L20. It is important during the early stages of 50S assembly. It makes multiple contacts with different domains of the 23S rRNA in the assembled 50S subunit and ribosome. In terms of biological role, the globular domain of the protein is located near the polypeptide exit tunnel on the outside of the subunit, while an extended beta-hairpin is found that lines the wall of the exit tunnel in the center of the 70S ribosome. The protein is Large ribosomal subunit protein uL22 of Lysinibacillus sphaericus (strain C3-41).